Here is a 146-residue protein sequence, read N- to C-terminus: Catabolic 3-dehydroquinase (146 aa).

The Proton acceptor role is filled by tyrosine 24. Substrate-binding residues include asparagine 78, histidine 84, and aspartate 91. Catalysis depends on histidine 104, which acts as the Proton donor. Residues isoleucine 105 to threonine 106 and arginine 115 each bind substrate.

It belongs to the type-II 3-dehydroquinase family. As to quaternary structure, homododecamer. Adopts a ring-like structure, composed of an arrangement of two hexameric rings stacked on top of one another.

It carries out the reaction 3-dehydroquinate = 3-dehydroshikimate + H2O. It functions in the pathway aromatic compound metabolism; 3,4-dihydroxybenzoate biosynthesis; 3,4-dihydroxybenzoate from 3-dehydroquinate: step 1/2. In terms of biological role, is involved in the catabolism of quinate. Allows the utilization of quinate as carbon source via the beta-ketoadipate pathway. The protein is Catabolic 3-dehydroquinase of Candida albicans (strain SC5314 / ATCC MYA-2876) (Yeast).